The following is a 344-amino-acid chain: Meiotic expression up-regulated protein 26 (344 aa).

It is found in the nucleus. The protein is Meiotic expression up-regulated protein 26 (meu26) of Schizosaccharomyces pombe (strain 972 / ATCC 24843) (Fission yeast).